We begin with the raw amino-acid sequence, 177 residues long: Large ribosomal subunit protein uL6 (177 aa).

It belongs to the universal ribosomal protein uL6 family. As to quaternary structure, part of the 50S ribosomal subunit.

In terms of biological role, this protein binds to the 23S rRNA, and is important in its secondary structure. It is located near the subunit interface in the base of the L7/L12 stalk, and near the tRNA binding site of the peptidyltransferase center. This chain is Large ribosomal subunit protein uL6, found in Rickettsia akari (strain Hartford).